The following is a 326-amino-acid chain: Fructose operon regulatory protein (326 aa).

The HTH lacI-type domain maps to 1-58; sequence MTLDEIAKLAGVSKTTASYVINGKAQKYRISEKTQHKVMAVVEQYNFRPDHAASALRA. The segment at residues 3–22 is a DNA-binding region (H-T-H motif); the sequence is LDEIAKLAGVSKTTASYVIN.

In terms of assembly, homodimer.

Its activity is regulated as follows. Interaction with F1P may induce a structural change in the DNA spacer region between the -35 and -10 elements, thereby facilitating RNAP binding to the promoter to trigger the transcriptional activation of the fru operon. Interaction with F1P does not release FruR from its binding sequence. Functionally, regulates the expression of the fruBKA (fru) operon, which encodes proteins involved in the import and metabolism of fructose. In the absence of fructose 1-phosphate (F1P), binds to the promoter region of fruB, interferes with the binding of the RNA polymerase (RNAP) to the promoter and represses the expression of the operon. In the presence of F1P, activates the transcription of the fru operon by facilitating the binding of RNAP to the promoter. Essential for the expression of the fru operon and thus for growth on fructose. This is Fructose operon regulatory protein from Vibrio cholerae serotype O1 (strain ATCC 39315 / El Tor Inaba N16961).